We begin with the raw amino-acid sequence, 145 residues long: Basic phospholipase A2 cPm05 (145 aa).

Residues 1–21 (MYPAHLLVLLAVCISLLGASA) form the signal peptide. A propeptide spanning residues 22-27 (IPPLPL) is cleaved from the precursor. 7 disulfides stabilise this stretch: Cys-38-Cys-98, Cys-54-Cys-144, Cys-56-Cys-72, Cys-71-Cys-125, Cys-78-Cys-118, Cys-87-Cys-111, and Cys-105-Cys-116. Ca(2+)-binding residues include Tyr-55, Gly-57, and Gly-59. Residue His-75 is part of the active site. Asp-76 is a Ca(2+) binding site. Residue Asp-119 is part of the active site.

This sequence belongs to the phospholipase A2 family. Group I subfamily. D49 sub-subfamily. The cofactor is Ca(2+). As to expression, expressed by the venom gland.

It localises to the secreted. It carries out the reaction a 1,2-diacyl-sn-glycero-3-phosphocholine + H2O = a 1-acyl-sn-glycero-3-phosphocholine + a fatty acid + H(+). Functionally, PLA2 catalyzes the calcium-dependent hydrolysis of the 2-acyl groups in 3-sn-phosphoglycerides. This chain is Basic phospholipase A2 cPm05, found in Laticauda semifasciata (Black-banded sea krait).